A 270-amino-acid polypeptide reads, in one-letter code: Glutamate racemase (270 aa).

Substrate is bound by residues 7 to 8 (DS) and 39 to 40 (YG). Cys70 functions as the Proton donor/acceptor in the catalytic mechanism. Residue 71–72 (NT) coordinates substrate. Cys194 serves as the catalytic Proton donor/acceptor. Residue 195–196 (TH) participates in substrate binding.

This sequence belongs to the aspartate/glutamate racemases family.

It carries out the reaction L-glutamate = D-glutamate. The protein operates within cell wall biogenesis; peptidoglycan biosynthesis. In terms of biological role, provides the (R)-glutamate required for cell wall biosynthesis. The polypeptide is Glutamate racemase (Cereibacter sphaeroides (strain ATCC 17023 / DSM 158 / JCM 6121 / CCUG 31486 / LMG 2827 / NBRC 12203 / NCIMB 8253 / ATH 2.4.1.) (Rhodobacter sphaeroides)).